The primary structure comprises 716 residues: Pyruvate/proton symporter BtsT (716 aa).

Residues 1–5 are Cytoplasmic-facing; the sequence is MDTKK. A helical transmembrane segment spans residues 6-26; the sequence is IFKHIPWVILGIIGAFCLAVV. Residues 27–30 are Periplasmic-facing; it reads ALRR. The helical transmembrane segment at 31–51 threads the bilayer; it reads GEHISALWIVVASVSVYLVAY. The Cytoplasmic portion of the chain corresponds to 52–88; that stretch reads RYYSLYIAQKVMKLDPTRATPAVINNDGLNYVPTNRY. A helical transmembrane segment spans residues 89–109; it reads VLFGHHFAAIAGAGPLVGPVL. Over 110–119 the chain is Periplasmic; the sequence is AAQMGYLPGT. A helical transmembrane segment spans residues 120–140; that stretch reads LWLLAGVVLAGAVQDFMVLFI. Topologically, residues 141–163 are cytoplasmic; it reads SSRRNGASLGEMIKEEMGPVPGT. The chain crosses the membrane as a helical span at residues 164 to 184; sequence IALFGCFLIMIIILAVLALIV. Residues 185–191 lie on the Periplasmic side of the membrane; sequence VKALAES. A helical transmembrane segment spans residues 192 to 212; it reads PWGVFTVCSTVPIALFMGIYM. Over 213 to 222 the chain is Cytoplasmic; the sequence is RFIRPGRVGE. Residues 223–243 traverse the membrane as a helical segment; sequence VSVIGIVLLVASIYFGGVIAH. The Periplasmic portion of the chain corresponds to 244–257; that stretch reads DPYWGPALTFKDTT. A helical membrane pass occupies residues 258–278; that stretch reads ITFALIGYAFVSALLPVWLIL. At 279–282 the chain is on the cytoplasmic side; sequence APRD. A helical transmembrane segment spans residues 283–303; the sequence is YLATFLKIGVIVGLALGIVVL. The Periplasmic portion of the chain corresponds to 304–326; the sequence is NPELKMPAMTQYIDGTGPLWKGA. A helical membrane pass occupies residues 327–347; the sequence is LFPFLFITIACGAVSGFHALI. Topologically, residues 348–374 are cytoplasmic; that stretch reads SSGTTPKLLANETDARFIGYGAMLMES. Residues 375–395 traverse the membrane as a helical segment; sequence FVAIMALVAASIIEPGLYFAM. At 396-484 the chain is on the periplasmic side; sequence NTPPAGLGIT…HVFHKVLPMA (89 aa). Residues 485 to 505 traverse the membrane as a helical segment; that stretch reads DMGFWYHFGILFEALFILTAL. The Cytoplasmic segment spans residues 506–531; that stretch reads DAGTRSGRFMLQDLLGNFIPFLKKTD. A helical membrane pass occupies residues 532 to 552; sequence SLVAGIIGTAGCVGLWGYLLY. At 553–568 the chain is on the periplasmic side; that stretch reads QGVVDPLGGVKSLWPL. A helical transmembrane segment spans residues 569–589; sequence FGISNQMLAAVALVLGTVVLI. Residues 590 to 596 lie on the Cytoplasmic side of the membrane; that stretch reads KMKRTQY. Residues 597 to 617 traverse the membrane as a helical segment; the sequence is IWVTVVPAVWLLICTTWALGL. The Periplasmic segment spans residues 618-668; the sequence is KLFSTNPQMEGFFYMASQYKEKIANGTDLTAQQIANMNHIVVNNYTNAGLS. A helical membrane pass occupies residues 669 to 689; sequence ILFLIVVYSIIFYGFKTWLAV. The Cytoplasmic portion of the chain corresponds to 690 to 716; the sequence is RNSDKRTDKETPYVPIPEGGVKISSHH. The interval 696-716 is disordered; the sequence is TDKETPYVPIPEGGVKISSHH.

It belongs to the peptide transporter carbon starvation (CstA) (TC 2.A.114) family. As to quaternary structure, interacts with BtsS and YpdA.

It is found in the cell inner membrane. The catalysed reaction is pyruvate(out) + H(+)(out) = pyruvate(in) + H(+)(in). Transport is inhibited by the protonophores 2,4-dinitrophenol (DNP) and carbonyl cyanide m-chlorophenyl hydrazone (CCCP), but not by ionophores such as valinomycin, nonactin and nigericin. In terms of biological role, transports pyruvate with a high affinity and specificity. The process is driven by the proton motive force. Under nutrient limiting conditions, mediates the uptake of pyruvate, thus enabling it to be used as a carbon source for the growth and survival. Part of a nutrient-sensing regulatory network composed of the two-component regulatory systems BtsS/BtsR and YpdA/YpdB, and their respective target proteins, BtsT and YhjX. The polypeptide is Pyruvate/proton symporter BtsT (Escherichia coli (strain K12)).